The following is a 189-amino-acid chain: GTP cyclohydrolase 1 (189 aa).

Zn(2+) is bound by residues cysteine 78, histidine 81, and cysteine 150.

This sequence belongs to the GTP cyclohydrolase I family. As to quaternary structure, homomer.

It carries out the reaction GTP + H2O = 7,8-dihydroneopterin 3'-triphosphate + formate + H(+). It functions in the pathway cofactor biosynthesis; 7,8-dihydroneopterin triphosphate biosynthesis; 7,8-dihydroneopterin triphosphate from GTP: step 1/1. In Listeria monocytogenes serotype 4b (strain CLIP80459), this protein is GTP cyclohydrolase 1.